The chain runs to 72 residues: Putative membrane protein insertion efficiency factor (72 aa).

This sequence belongs to the UPF0161 family.

Its subcellular location is the cell inner membrane. Could be involved in insertion of integral membrane proteins into the membrane. The chain is Putative membrane protein insertion efficiency factor from Myxococcus xanthus (strain DK1622).